We begin with the raw amino-acid sequence, 133 residues long: Thioredoxin-2, mitochondrial (133 aa).

The transit peptide at 1 to 29 (MRGFIANSLKPHMRSFALRRSFTSSRILR) directs the protein to the mitochondrion. Residues 30-133 (KVNAVESFGD…LSSLLAKYQE (104 aa)) enclose the Thioredoxin domain. Catalysis depends on nucleophile residues cysteine 59 and cysteine 62. Residues cysteine 59 and cysteine 62 are joined by a disulfide bond.

This sequence belongs to the thioredoxin family. In terms of assembly, interacts with arg3.

The protein resides in the mitochondrion. In terms of biological role, disulfide reductase which serves multiple functions in mitochondria, protecting mitochondrial components against thiol-oxidative damage as a thiol-disulfide oxidoreductase, and supporting urea cycle and respiration in mitochondria in a manner independent of active site thiols. The polypeptide is Thioredoxin-2, mitochondrial (trx2) (Schizosaccharomyces pombe (strain 972 / ATCC 24843) (Fission yeast)).